The primary structure comprises 139 residues: Trafficking protein particle complex subunit 2-like protein (139 aa).

The protein belongs to the TRAPP small subunits family. Sedlin subfamily. As to quaternary structure, component of the multisubunit TRAPP (transport protein particle) complex, which includes at least TRAPPC2, TRAPPC2L, TRAPPC3, TRAPPC3L, TRAPPC4, TRAPPC5, TRAPPC8, TRAPPC9, TRAPPC10, TRAPPC11 and TRAPPC12. Interacts with the heterodimer TRAPPC3-TRAPPC6A.

The protein resides in the cytoplasm. Its subcellular location is the perinuclear region. It localises to the endoplasmic reticulum. The protein localises to the golgi apparatus. Its function is as follows. May play a role in vesicular transport from endoplasmic reticulum to Golgi. This Bos taurus (Bovine) protein is Trafficking protein particle complex subunit 2-like protein (TRAPPC2L).